The sequence spans 164 residues: UPF0304 protein YfbU (164 aa).

The protein belongs to the UPF0304 family.

The chain is UPF0304 protein YfbU from Shigella flexneri.